The following is a 577-amino-acid chain: Jasmonoyl--L-amino acid synthetase JAR4 (577 aa).

Ser-99 is a binding site for ATP. Ser-102 contacts jasmonate. ATP is bound by residues Met-119, Thr-122, Gly-163, Asn-168, and 331–336 (GSSEGW). Residue 166–170 (TTNVY) coordinates an L-alpha-amino acid. 328-331 (ADYG) serves as a coordination point for jasmonate. 531–535 (KILDH) lines the an L-alpha-amino acid pocket.

The protein belongs to the IAA-amido conjugating enzyme family.

The catalysed reaction is a jasmonate + an L-alpha-amino acid + ATP = a jasmonyl-L-amino acid + AMP + diphosphate + H(+). In terms of biological role, catalyzes the synthesis of jasmonate-amino acid conjugates by adenylation. Catalyzes the conjugation of jasmonate (JA) to Ile, Leu and Val. Catalyzes the conjugation of jasmonate (JA) to Ile to mediate defense signaling and resistance to the herbivore Manduca sexta caterpillars. The chain is Jasmonoyl--L-amino acid synthetase JAR4 from Nicotiana attenuata (Coyote tobacco).